A 556-amino-acid polypeptide reads, in one-letter code: Thermosome subunit beta (556 aa).

Positions 530–556 are disordered; sequence LSTDKGDDDGGAGGMGGGMGGGMGGMM. Residues 540–556 are compositionally biased toward gly residues; that stretch reads GAGGMGGGMGGGMGGMM.

Belongs to the TCP-1 chaperonin family. In terms of assembly, forms an oligomeric complex of eight-membered rings.

Its function is as follows. Molecular chaperone; binds unfolded polypeptides in vitro, and has a weak ATPase activity. The protein is Thermosome subunit beta (thsB) of Halobacterium salinarum (strain ATCC 700922 / JCM 11081 / NRC-1) (Halobacterium halobium).